Here is an 81-residue protein sequence, read N- to C-terminus: Putative phytosulfokines 6 (81 aa).

An N-terminal signal peptide occupies residues 1–20; it reads MKQSLCLAVLFLILSTSSSA. Positions 21–72 are excised as a propeptide; the sequence is IRRGKEDQEINPLVSATSVEEDSVNKLMGMEYCGEGDEECLRRRMMTESHLD. Sulfotyrosine occurs at positions 73 and 75. The propeptide occupies 78–81; it reads HHKH.

Belongs to the phytosulfokine family. In terms of processing, sulfation is important for activity and for the binding to a putative membrane receptor. PSK-beta is an enzymatic derivative of PSK-alpha. Expressed in roots, leaves, stems, flowers and siliques. Most abundant in vascular bundles and in root tips.

It localises to the secreted. Promotes plant cell differentiation, organogenesis and somatic embryogenesis as well as cell proliferation. The protein is Putative phytosulfokines 6 (PSK6) of Arabidopsis thaliana (Mouse-ear cress).